A 484-amino-acid polypeptide reads, in one-letter code: Malonate-semialdehyde dehydrogenase 1 (484 aa).

NAD(+) is bound by residues Phe-154, Lys-178, Glu-181, Arg-182, and Ser-231. Cys-286 acts as the Nucleophile in catalysis. An NAD(+)-binding site is contributed by Glu-384.

It belongs to the aldehyde dehydrogenase family. IolA subfamily. Homotetramer.

The enzyme catalyses 3-oxopropanoate + NAD(+) + CoA + H2O = hydrogencarbonate + acetyl-CoA + NADH + H(+). It catalyses the reaction 2-methyl-3-oxopropanoate + NAD(+) + CoA + H2O = propanoyl-CoA + hydrogencarbonate + NADH + H(+). The protein operates within polyol metabolism; myo-inositol degradation into acetyl-CoA; acetyl-CoA from myo-inositol: step 7/7. Catalyzes the oxidation of malonate semialdehyde (MSA) and methylmalonate semialdehyde (MMSA) into acetyl-CoA and propanoyl-CoA, respectively. Is involved in a myo-inositol catabolic pathway. Bicarbonate, and not CO2, is the end-product of the enzymatic reaction. In Bacillus licheniformis (strain ATCC 14580 / DSM 13 / JCM 2505 / CCUG 7422 / NBRC 12200 / NCIMB 9375 / NCTC 10341 / NRRL NRS-1264 / Gibson 46), this protein is Malonate-semialdehyde dehydrogenase 1.